Consider the following 525-residue polypeptide: RNA-directed RNA polymerase (525 aa).

The region spanning 72-272 is the RdRp catalytic domain; the sequence is LVYADNIYIV…DKERLFCSAA (201 aa).

In terms of assembly, interacts with VP3 in the cytoplasm. May exist in multiple phosphorylated forms.

It is found in the virion. It catalyses the reaction RNA(n) + a ribonucleoside 5'-triphosphate = RNA(n+1) + diphosphate. RNA-dependent RNA polymerase which is found both free and covalently attached to the genomic RNA. May also contain guanylyl and methyl transferase activities. The chain is RNA-directed RNA polymerase (VP1) from Gallus gallus (Chicken).